A 347-amino-acid chain; its full sequence is UPF0284 protein LS215_0030 (347 aa).

This sequence belongs to the UPF0284 family.

In Saccharolobus islandicus (strain L.S.2.15 / Lassen #1) (Sulfolobus islandicus), this protein is UPF0284 protein LS215_0030.